Consider the following 186-residue polypeptide: Ribosome-recycling factor (186 aa).

This sequence belongs to the RRF family.

It localises to the cytoplasm. Its function is as follows. Responsible for the release of ribosomes from messenger RNA at the termination of protein biosynthesis. May increase the efficiency of translation by recycling ribosomes from one round of translation to another. The polypeptide is Ribosome-recycling factor (Cupriavidus pinatubonensis (strain JMP 134 / LMG 1197) (Cupriavidus necator (strain JMP 134))).